We begin with the raw amino-acid sequence, 83 residues long: MSSGGLLLLLGLLTLWEVLTPVSSKDRPRFCELPADPGPCNGLFQAFYYNPVQRKCLKFRYGGCKGNPNTFKTIEECKRTCAA.

The signal sequence occupies residues 1–24; sequence MSSGGLLLLLGLLTLWEVLTPVSS. A BPTI/Kunitz inhibitor domain is found at 31–81; the sequence is CELPADPGPCNGLFQAFYYNPVQRKCLKFRYGGCKGNPNTFKTIEECKRTC. Intrachain disulfides connect C31-C81, C40-C64, and C56-C77.

This sequence belongs to the venom Kunitz-type family. In terms of tissue distribution, expressed by the venom gland.

Its subcellular location is the secreted. In terms of biological role, specifically inhibits MMP2 activity (EC(50)=100 nM and Ki=60 nM). The polypeptide is Kunitz serine protease inhibitor Pr-mulgin 1 (Pseudechis rossignolii (Papuan pigmy mulga snake)).